Here is a 224-residue protein sequence, read N- to C-terminus: Large ribosomal subunit protein uL3 (224 aa).

The residue at position 158 (Q158) is an N5-methylglutamine.

It belongs to the universal ribosomal protein uL3 family. In terms of assembly, part of the 50S ribosomal subunit. Forms a cluster with proteins L14 and L19. Methylated by PrmB.

Functionally, one of the primary rRNA binding proteins, it binds directly near the 3'-end of the 23S rRNA, where it nucleates assembly of the 50S subunit. This chain is Large ribosomal subunit protein uL3, found in Paracidovorax citrulli (strain AAC00-1) (Acidovorax citrulli).